The following is a 1019-amino-acid chain: Probable LRR receptor-like serine/threonine-protein kinase At1g29720 (1019 aa).

An N-terminal signal peptide occupies residues 1-19 (MSIILWSFFLFFTIILSSL). Topologically, residues 20 to 615 (TNITTLASFS…EKTKHHIKYP (596 aa)) are extracellular. N-linked (GlcNAc...) asparagine glycans are attached at residues asparagine 21, asparagine 79, and asparagine 90. 13 LRR repeats span residues 93-117 (ICRI…LTKL), 118-141 (PYLK…WAKM), 143-165 (YLTS…LQNF), 166-189 (KNLT…LGNL), 190-212 (TSLT…TLAR), 214-236 (VNLE…YIGN), 237-261 (WTRL…VVRL), 263-283 (NLLE…NLSS), 284-307 (KGLK…IWNL), 308-330 (TDLK…VQNP), 332-351 (KNIY…GGLL), 352-374 (NSQS…QKGS), and 375-398 (TINT…AVPA). Asparagine 153, asparagine 167, and asparagine 188 each carry an N-linked (GlcNAc...) asparagine glycan. Asparagine 225 and asparagine 236 each carry an N-linked (GlcNAc...) asparagine glycan. 2 N-linked (GlcNAc...) asparagine glycosylation sites follow: asparagine 280 and asparagine 306. N-linked (GlcNAc...) asparagine glycosylation is found at asparagine 363, asparagine 387, asparagine 469, and asparagine 558. Residues 616-636 (LILGASGALVTIVLLAVGIYA) traverse the membrane as a helical segment. Topologically, residues 637-1019 (RGIYRRDNNR…STVENSSSSL (383 aa)) are cytoplasmic. The 274-residue stretch at 673 to 946 (FDQANKLGEG…EAVKMLEGEI (274 aa)) folds into the Protein kinase domain. ATP is bound by residues 679–687 (LGEGGFGSV) and lysine 701. Tyrosine 746 is subject to Phosphotyrosine. The active-site Proton acceptor is the aspartate 797. A Phosphoserine modification is found at serine 830. Phosphothreonine is present on residues threonine 831 and threonine 836. Residue tyrosine 844 is modified to Phosphotyrosine.

Belongs to the protein kinase superfamily. Ser/Thr protein kinase family.

The protein localises to the cell membrane. The catalysed reaction is L-seryl-[protein] + ATP = O-phospho-L-seryl-[protein] + ADP + H(+). The enzyme catalyses L-threonyl-[protein] + ATP = O-phospho-L-threonyl-[protein] + ADP + H(+). In Arabidopsis thaliana (Mouse-ear cress), this protein is Probable LRR receptor-like serine/threonine-protein kinase At1g29720 (RFK1).